The following is a 68-amino-acid chain: Large ribosomal subunit protein uL29 (68 aa).

It belongs to the universal ribosomal protein uL29 family.

The chain is Large ribosomal subunit protein uL29 (rpl29) from Pyrococcus abyssi (strain GE5 / Orsay).